The sequence spans 657 residues: Glycogen debranching enzyme (657 aa).

Aspartate 336 (nucleophile) is an active-site residue. The Proton donor role is filled by glutamate 371. The segment covering 458–467 (NEANGEENRD) has biased composition (basic and acidic residues). A disordered region spans residues 458–479 (NEANGEENRDGTNNNYSNNHGK).

This sequence belongs to the glycosyl hydrolase 13 family.

It carries out the reaction Hydrolysis of (1-&gt;6)-alpha-D-glucosidic linkages to branches with degrees of polymerization of three or four glucose residues in limit dextrin.. Its pathway is glycan degradation; glycogen degradation. Its function is as follows. Removes maltotriose and maltotetraose chains that are attached by 1,6-alpha-linkage to the limit dextrin main chain, generating a debranched limit dextrin. This is Glycogen debranching enzyme from Shigella boydii serotype 18 (strain CDC 3083-94 / BS512).